A 675-amino-acid chain; its full sequence is Nexilin (675 aa).

The tract at residues 1–66 (MNDISQKAEI…RKEQYIRERE (66 aa)) is disordered. Position 16 is a phosphoserine (lysine 16). Over residues 27-66 (GKGDVKDKFEAMQRAREERNQRRSRDEKQRRKEQYIRERE) the composition is skewed to basic and acidic residues. Serine 80 is modified (phosphoserine). Residues 105–127 (RFAEMEKQRQEEQRKRTEEERKR) are disordered. Serine 241 is modified (phosphoserine). Disordered regions lie at residues 254–278 (LERQRQENRKKQAEEEARKRLEEEK) and 313–336 (SFEEMERQRREDEKRKAEEEARRR). Phosphoserine occurs at positions 357 and 365. Threonine 370 bears the Phosphothreonine mark. Disordered stretches follow at residues 487–513 (ENFHEEDDVDVRPARKSEAPFTHKVNM) and 551–584 (LQKKREEEEEEEGSIMNGSTAEDEEQTRSGAPWF). Residues serine 564 and serine 569 each carry the phosphoserine modification. The Ig-like domain maps to 582 to 670 (PWFKKPLKNT…GSAASTCILT (89 aa)).

As to quaternary structure, interacts with F-actin. As to expression, abundantly expressed in heart and skeletal muscle, and at lower levels in placenta, lung, liver and pancreas. Also expressed in HeLaS3 and MOLT-4 cell lines.

Its subcellular location is the cytoplasm. It is found in the cytoskeleton. It localises to the cell junction. The protein localises to the adherens junction. The protein resides in the myofibril. Its subcellular location is the sarcomere. It is found in the z line. Its function is as follows. Involved in regulating cell migration through association with the actin cytoskeleton. Has an essential role in the maintenance of Z line and sarcomere integrity. This chain is Nexilin, found in Homo sapiens (Human).